Consider the following 328-residue polypeptide: Transcription factor bHLH25 (328 aa).

Residues P125–D152 are disordered. Residues S148–L197 enclose the bHLH domain.

Homodimer. In terms of tissue distribution, expressed in flowers.

Its subcellular location is the nucleus. In Arabidopsis thaliana (Mouse-ear cress), this protein is Transcription factor bHLH25 (BHLH25).